Reading from the N-terminus, the 294-residue chain is Bifunctional protein FolD (294 aa).

Residues 164–166, Ser-193, and Ile-234 contribute to the NADP(+) site; that span reads GRS.

Belongs to the tetrahydrofolate dehydrogenase/cyclohydrolase family. Homodimer.

The catalysed reaction is (6R)-5,10-methylene-5,6,7,8-tetrahydrofolate + NADP(+) = (6R)-5,10-methenyltetrahydrofolate + NADPH. It catalyses the reaction (6R)-5,10-methenyltetrahydrofolate + H2O = (6R)-10-formyltetrahydrofolate + H(+). It functions in the pathway one-carbon metabolism; tetrahydrofolate interconversion. Catalyzes the oxidation of 5,10-methylenetetrahydrofolate to 5,10-methenyltetrahydrofolate and then the hydrolysis of 5,10-methenyltetrahydrofolate to 10-formyltetrahydrofolate. The protein is Bifunctional protein FolD of Flavobacterium psychrophilum (strain ATCC 49511 / DSM 21280 / CIP 103535 / JIP02/86).